Reading from the N-terminus, the 253-residue chain is 5-oxoprolinase subunit A (253 aa).

Belongs to the LamB/PxpA family. As to quaternary structure, forms a complex composed of PxpA, PxpB and PxpC.

The enzyme catalyses 5-oxo-L-proline + ATP + 2 H2O = L-glutamate + ADP + phosphate + H(+). Its function is as follows. Catalyzes the cleavage of 5-oxoproline to form L-glutamate coupled to the hydrolysis of ATP to ADP and inorganic phosphate. The chain is 5-oxoprolinase subunit A from Bacillus cereus (strain 03BB102).